Here is a 238-residue protein sequence, read N- to C-terminus: Large ribosomal subunit protein uL3 (238 aa).

This sequence belongs to the universal ribosomal protein uL3 family. Part of the 50S ribosomal subunit. Forms a cluster with proteins L14 and L19.

One of the primary rRNA binding proteins, it binds directly near the 3'-end of the 23S rRNA, where it nucleates assembly of the 50S subunit. The protein is Large ribosomal subunit protein uL3 of Mesoplasma florum (strain ATCC 33453 / NBRC 100688 / NCTC 11704 / L1) (Acholeplasma florum).